The primary structure comprises 171 residues: Large ribosomal subunit protein bL9 (171 aa).

This sequence belongs to the bacterial ribosomal protein bL9 family.

In terms of biological role, binds to the 23S rRNA. This is Large ribosomal subunit protein bL9 from Rickettsia typhi (strain ATCC VR-144 / Wilmington).